The primary structure comprises 275 residues: Photosystem II extrinsic protein O (275 aa).

Residues 1 to 28 (MRFRTLLIAFLALCLGLITACSEGPANA) form the signal peptide.

Belongs to the PsbO family. In terms of assembly, PSII is composed of 1 copy each of membrane proteins PsbA, PsbB, PsbC, PsbD, PsbE, PsbF, PsbH, PsbI, PsbJ, PsbK, PsbL, PsbM, PsbT, PsbX, PsbY, PsbZ, Psb30/Ycf12, peripheral proteins PsbO, CyanoQ (PsbQ), PsbU, PsbV and a large number of cofactors. It forms dimeric complexes.

Its subcellular location is the cellular thylakoid membrane. In terms of biological role, one of the extrinsic, lumenal subunits of photosystem II (PSII), which stabilize and protect the oxygen-evolving complex. PSII is a light-driven water plastoquinone oxidoreductase, using light energy to abstract electrons from H(2)O, generating a proton gradient subsequently used for ATP formation. Required for dimerization of PSII and for binding of PsbQ to PSII. The protein is Photosystem II extrinsic protein O of Crocosphaera subtropica (strain ATCC 51142 / BH68) (Cyanothece sp. (strain ATCC 51142)).